The primary structure comprises 571 residues: MSFKMTQNQYTSLYGPTVGDSIRLGDTNLFAQIEKDYAVYGEEATFGGGKSIRDGMAQNPRVTRDDVNVADLVISNAVIIDYDKVVKADIGIKNGYIFAIGNAGNPDIMDNVDIIIGSTTDIIAAEGKIVTAGGIDTHVHFINPEQAEVALESGITTHIGGGTGASEGSKATTVTPGPWHIHRMLEAAEGLPINVGFTGKGQATNPTALIEQINAGAIGLKVHEDWGATPSALSHALDVADEFDVQIALHADTLNEAGFMEDTMAAVKDRVLHMYHTEGAGGGHTPDLIKSAAFSNILPSSTNPTLPYTHNTVDEHLDMVMITHHLNAAIPEDIAFADSRIRKETIAAEDVLQDMGVFSMISSDSQAMGRVGEVITRTWQVAHRMKEQRGPLDGDFEHNDNNRIKRYIAKYTINPAITHGISEYVGSIEPGKLADIVLWDPIFFGVKPELVVKGGLINSAVNGDANGSIPTSEPMKYRKMYGQYGGNLTSTSMTFVSKTAYENGINRALNLKRMVRPVKNIRQLSKADMKNNSATPKLDVDPQTYEVYVDGEKITSNAATELPLTQRYFLF.

The Urease domain maps to 133 to 571; the sequence is GGIDTHVHFI…LPLTQRYFLF (439 aa). Ni(2+) is bound by residues H138, H140, and K221. Residue K221 is modified to N6-carboxylysine. Substrate is bound at residue H223. Residues H250 and H276 each coordinate Ni(2+). Residue H324 is the Proton donor of the active site. Residue D364 participates in Ni(2+) binding.

This sequence belongs to the metallo-dependent hydrolases superfamily. Urease alpha subunit family. As to quaternary structure, heterotrimer of UreA (gamma), UreB (beta) and UreC (alpha) subunits. Three heterotrimers associate to form the active enzyme. Ni cation serves as cofactor. Carboxylation allows a single lysine to coordinate two nickel ions.

Its subcellular location is the cytoplasm. The catalysed reaction is urea + 2 H2O + H(+) = hydrogencarbonate + 2 NH4(+). Its pathway is nitrogen metabolism; urea degradation; CO(2) and NH(3) from urea (urease route): step 1/1. The chain is Urease subunit alpha from Staphylococcus aureus (strain bovine RF122 / ET3-1).